The sequence spans 254 residues: Triosephosphate isomerase (254 aa).

10–12 (NWK) is a substrate binding site. H99 (electrophile) is an active-site residue. Residue E169 is the Proton acceptor of the active site. Residues G175, S215, and 236–237 (GG) contribute to the substrate site.

Belongs to the triosephosphate isomerase family. In terms of assembly, homodimer.

The protein resides in the cytoplasm. The catalysed reaction is D-glyceraldehyde 3-phosphate = dihydroxyacetone phosphate. It functions in the pathway carbohydrate biosynthesis; gluconeogenesis. Its pathway is carbohydrate degradation; glycolysis; D-glyceraldehyde 3-phosphate from glycerone phosphate: step 1/1. In terms of biological role, involved in the gluconeogenesis. Catalyzes stereospecifically the conversion of dihydroxyacetone phosphate (DHAP) to D-glyceraldehyde-3-phosphate (G3P). This Chlamydia caviae (strain ATCC VR-813 / DSM 19441 / 03DC25 / GPIC) (Chlamydophila caviae) protein is Triosephosphate isomerase.